The primary structure comprises 168 residues: Fusaric acid resistance protein FusE (168 aa).

In terms of biological role, involved in the resistance (detoxification) of the fungal toxin fusaric acid. The polypeptide is Fusaric acid resistance protein FusE (fusE) (Burkholderia cepacia (Pseudomonas cepacia)).